The sequence spans 302 residues: tRNA-cytidine(32) 2-sulfurtransferase (302 aa).

A PP-loop motif motif is present at residues 45 to 50; the sequence is SGGKDS. Residues C120, C123, and C211 each coordinate [4Fe-4S] cluster.

Belongs to the TtcA family. In terms of assembly, homodimer. Mg(2+) is required as a cofactor. Requires [4Fe-4S] cluster as cofactor.

It localises to the cytoplasm. It carries out the reaction cytidine(32) in tRNA + S-sulfanyl-L-cysteinyl-[cysteine desulfurase] + AH2 + ATP = 2-thiocytidine(32) in tRNA + L-cysteinyl-[cysteine desulfurase] + A + AMP + diphosphate + H(+). It participates in tRNA modification. In terms of biological role, catalyzes the ATP-dependent 2-thiolation of cytidine in position 32 of tRNA, to form 2-thiocytidine (s(2)C32). The sulfur atoms are provided by the cysteine/cysteine desulfurase (IscS) system. In Aeromonas salmonicida (strain A449), this protein is tRNA-cytidine(32) 2-sulfurtransferase.